Consider the following 136-residue polypeptide: MSDRAEVRNIPFKLGMYLTVGGVVNSNATRFSINVGESTDSIAMHMDHRFSYGADQNVLVLNSLVHNVGWQQEERSKKFPFTKGDHFQTTITFDTHTFYIQLSNGETVEFPNRNKDAAFNLIYLAGDARLTFVRLE.

S2 is modified (N-acetylserine). The region spanning 4-136 (RAEVRNIPFK…DARLTFVRLE (133 aa)) is the Galectin domain. 70–76 (WQQEERS) is an a beta-D-galactoside binding site.

As to quaternary structure, homodimer.

This protein binds beta-galactoside. Its physiological function is not yet known. This Conger myriaster (Conger eel) protein is Congerin-2.